The primary structure comprises 148 residues: Myosin light chain 3, skeletal muscle isoform (148 aa).

T1 is subject to N-acetylthreonine. 2 EF-hand domains span residues 6–41 (DQIE…LGQN) and 82–117 (GTYD…LGEK).

In terms of assembly, myosin is a hexamer of 2 heavy chains and 4 light chains.

The sequence is that of Myosin light chain 3, skeletal muscle isoform from Chelon ramada (Thin-lipped grey mullet).